Here is a 318-residue protein sequence, read N- to C-terminus: Thymidylate synthase (318 aa).

DUMP contacts are provided by residues Arg-25 and 180-181 (RR). Cys-200 (nucleophile) is an active-site residue. DUMP contacts are provided by residues 220-223 (RSGD), Asn-231, and 261-263 (HIY). Position 223 (Asp-223) interacts with (6R)-5,10-methylene-5,6,7,8-tetrahydrofolate. Ala-317 provides a ligand contact to (6R)-5,10-methylene-5,6,7,8-tetrahydrofolate.

It belongs to the thymidylate synthase family. Bacterial-type ThyA subfamily. As to quaternary structure, homodimer.

It is found in the cytoplasm. The enzyme catalyses dUMP + (6R)-5,10-methylene-5,6,7,8-tetrahydrofolate = 7,8-dihydrofolate + dTMP. It participates in pyrimidine metabolism; dTTP biosynthesis. Catalyzes the reductive methylation of 2'-deoxyuridine-5'-monophosphate (dUMP) to 2'-deoxythymidine-5'-monophosphate (dTMP) while utilizing 5,10-methylenetetrahydrofolate (mTHF) as the methyl donor and reductant in the reaction, yielding dihydrofolate (DHF) as a by-product. This enzymatic reaction provides an intracellular de novo source of dTMP, an essential precursor for DNA biosynthesis. This Bacillus cereus (strain ATCC 10987 / NRS 248) protein is Thymidylate synthase.